We begin with the raw amino-acid sequence, 291 residues long: Glutamate racemase (291 aa).

Residues 12–13 (DS) and 44–45 (YG) contribute to the substrate site. Catalysis depends on C75, which acts as the Proton donor/acceptor. 76 to 77 (NT) serves as a coordination point for substrate. The Proton donor/acceptor role is filled by C187. 188 to 189 (TH) is a binding site for substrate. A compositionally biased stretch (low complexity) spans 234-247 (ATQAAGARAQMAPS). The tract at residues 234–257 (ATQAAGARAQMAPSAPEPKEGTPD) is disordered.

Belongs to the aspartate/glutamate racemases family.

It carries out the reaction L-glutamate = D-glutamate. It functions in the pathway cell wall biogenesis; peptidoglycan biosynthesis. Provides the (R)-glutamate required for cell wall biosynthesis. The polypeptide is Glutamate racemase (Koribacter versatilis (strain Ellin345)).